The primary structure comprises 273 residues: 2,3,4,5-tetrahydropyridine-2,6-dicarboxylate N-succinyltransferase (273 aa).

Arginine 104 and aspartate 141 together coordinate substrate.

It belongs to the transferase hexapeptide repeat family. In terms of assembly, homotrimer.

It is found in the cytoplasm. It catalyses the reaction (S)-2,3,4,5-tetrahydrodipicolinate + succinyl-CoA + H2O = (S)-2-succinylamino-6-oxoheptanedioate + CoA. Its pathway is amino-acid biosynthesis; L-lysine biosynthesis via DAP pathway; LL-2,6-diaminopimelate from (S)-tetrahydrodipicolinate (succinylase route): step 1/3. The chain is 2,3,4,5-tetrahydropyridine-2,6-dicarboxylate N-succinyltransferase from Chromobacterium violaceum (strain ATCC 12472 / DSM 30191 / JCM 1249 / CCUG 213 / NBRC 12614 / NCIMB 9131 / NCTC 9757 / MK).